Here is a 237-residue protein sequence, read N- to C-terminus: Ribonuclease PH (237 aa).

Residues Arg-86 and 124–126 each bind phosphate; that span reads GTR.

The protein belongs to the RNase PH family. In terms of assembly, homohexameric ring arranged as a trimer of dimers.

It carries out the reaction tRNA(n+1) + phosphate = tRNA(n) + a ribonucleoside 5'-diphosphate. In terms of biological role, phosphorolytic 3'-5' exoribonuclease that plays an important role in tRNA 3'-end maturation. Removes nucleotide residues following the 3'-CCA terminus of tRNAs; can also add nucleotides to the ends of RNA molecules by using nucleoside diphosphates as substrates, but this may not be physiologically important. Probably plays a role in initiation of 16S rRNA degradation (leading to ribosome degradation) during starvation. This is Ribonuclease PH from Cereibacter sphaeroides (strain ATCC 17029 / ATH 2.4.9) (Rhodobacter sphaeroides).